The sequence spans 79 residues: Small ribosomal subunit protein bS16cz (79 aa).

It belongs to the bacterial ribosomal protein bS16 family.

It is found in the plastid. The protein localises to the chloroplast. This is Small ribosomal subunit protein bS16cz from Arabidopsis thaliana (Mouse-ear cress).